Reading from the N-terminus, the 307-residue chain is Urease accessory protein UreD (307 aa).

The protein belongs to the UreD family. UreD, UreF and UreG form a complex that acts as a GTP-hydrolysis-dependent molecular chaperone, activating the urease apoprotein by helping to assemble the nickel containing metallocenter of UreC. The UreE protein probably delivers the nickel.

The protein resides in the cytoplasm. Functionally, required for maturation of urease via the functional incorporation of the urease nickel metallocenter. The chain is Urease accessory protein UreD from Prochlorococcus marinus (strain NATL2A).